The chain runs to 70 residues: Cytochrome c oxidase subunit 8B, mitochondrial (70 aa).

The N-terminal 24 residues, 1-24 (MLSLRPALRLLQAPLRCWAVPKAH), are a transit peptide targeting the mitochondrion. Topologically, residues 25 to 35 (VSAKPAETPTS) are mitochondrial matrix. The helical transmembrane segment at 36–59 (PAEQAVGLSFIFITFLGPAGWILS) threads the bilayer. Over 60-70 (HVENYKKRPRA) the chain is Mitochondrial intermembrane.

This sequence belongs to the cytochrome c oxidase VIII family. Component of the cytochrome c oxidase (complex IV, CIV), a multisubunit enzyme composed of 14 subunits. The complex is composed of a catalytic core of 3 subunits MT-CO1, MT-CO2 and MT-CO3, encoded in the mitochondrial DNA, and 11 supernumerary subunits COX4I, COX5A, COX5B, COX6A, COX6B, COX6C, COX7A, COX7B, COX7C, COX8 and NDUFA4, which are encoded in the nuclear genome. The complex exists as a monomer or a dimer and forms supercomplexes (SCs) in the inner mitochondrial membrane with NADH-ubiquinone oxidoreductase (complex I, CI) and ubiquinol-cytochrome c oxidoreductase (cytochrome b-c1 complex, complex III, CIII), resulting in different assemblies (supercomplex SCI(1)III(2)IV(1) and megacomplex MCI(2)III(2)IV(2)).

Its subcellular location is the mitochondrion inner membrane. It functions in the pathway energy metabolism; oxidative phosphorylation. Its function is as follows. Component of the cytochrome c oxidase, the last enzyme in the mitochondrial electron transport chain which drives oxidative phosphorylation. The respiratory chain contains 3 multisubunit complexes succinate dehydrogenase (complex II, CII), ubiquinol-cytochrome c oxidoreductase (cytochrome b-c1 complex, complex III, CIII) and cytochrome c oxidase (complex IV, CIV), that cooperate to transfer electrons derived from NADH and succinate to molecular oxygen, creating an electrochemical gradient over the inner membrane that drives transmembrane transport and the ATP synthase. Cytochrome c oxidase is the component of the respiratory chain that catalyzes the reduction of oxygen to water. Electrons originating from reduced cytochrome c in the intermembrane space (IMS) are transferred via the dinuclear copper A center (CU(A)) of subunit 2 and heme A of subunit 1 to the active site in subunit 1, a binuclear center (BNC) formed by heme A3 and copper B (CU(B)). The BNC reduces molecular oxygen to 2 water molecules using 4 electrons from cytochrome c in the IMS and 4 protons from the mitochondrial matrix. The polypeptide is Cytochrome c oxidase subunit 8B, mitochondrial (COX8B) (Ateles belzebuth (White-bellied spider monkey)).